We begin with the raw amino-acid sequence, 637 residues long: 1-deoxy-D-xylulose-5-phosphate synthase (637 aa).

Thiamine diphosphate contacts are provided by residues His88 and 129-131 (GHS). Asp160 is a Mg(2+) binding site. Residues 161 to 162 (GA), Asn189, Phe293, and Glu370 contribute to the thiamine diphosphate site. Asn189 lines the Mg(2+) pocket.

Belongs to the transketolase family. DXPS subfamily. In terms of assembly, homodimer. The cofactor is Mg(2+). It depends on thiamine diphosphate as a cofactor.

The catalysed reaction is D-glyceraldehyde 3-phosphate + pyruvate + H(+) = 1-deoxy-D-xylulose 5-phosphate + CO2. It functions in the pathway metabolic intermediate biosynthesis; 1-deoxy-D-xylulose 5-phosphate biosynthesis; 1-deoxy-D-xylulose 5-phosphate from D-glyceraldehyde 3-phosphate and pyruvate: step 1/1. Functionally, catalyzes the acyloin condensation reaction between C atoms 2 and 3 of pyruvate and glyceraldehyde 3-phosphate to yield 1-deoxy-D-xylulose-5-phosphate (DXP). The polypeptide is 1-deoxy-D-xylulose-5-phosphate synthase (Acinetobacter baumannii (strain AYE)).